We begin with the raw amino-acid sequence, 225 residues long: ATP phosphoribosyltransferase (225 aa).

Belongs to the ATP phosphoribosyltransferase family. Short subfamily. In terms of assembly, heteromultimer composed of HisG and HisZ subunits.

The protein resides in the cytoplasm. The catalysed reaction is 1-(5-phospho-beta-D-ribosyl)-ATP + diphosphate = 5-phospho-alpha-D-ribose 1-diphosphate + ATP. It participates in amino-acid biosynthesis; L-histidine biosynthesis; L-histidine from 5-phospho-alpha-D-ribose 1-diphosphate: step 1/9. Catalyzes the condensation of ATP and 5-phosphoribose 1-diphosphate to form N'-(5'-phosphoribosyl)-ATP (PR-ATP). Has a crucial role in the pathway because the rate of histidine biosynthesis seems to be controlled primarily by regulation of HisG enzymatic activity. This chain is ATP phosphoribosyltransferase, found in Herminiimonas arsenicoxydans.